Here is a 122-residue protein sequence, read N- to C-terminus: Large ribosomal subunit protein uL18 (122 aa).

The protein belongs to the universal ribosomal protein uL18 family. As to quaternary structure, part of the 50S ribosomal subunit; part of the 5S rRNA/L5/L18/L25 subcomplex. Contacts the 5S and 23S rRNAs.

Its function is as follows. This is one of the proteins that bind and probably mediate the attachment of the 5S RNA into the large ribosomal subunit, where it forms part of the central protuberance. The chain is Large ribosomal subunit protein uL18 from Thermosipho africanus (strain TCF52B).